The sequence spans 831 residues: MSVVGFDFGNENCLVAVARQRGIDVVLNDESNRETPAIVCFGDKQRFIGTAGAASTMMNPKNSISQIKRLIGRQFSDPELQRDIKSLPFSVTEGPDGYPLIHANYLGEIRAFTPTQVMGMMLSNLKGIAEKNLNTAVVDCCIGIPVYFTDLQRRAVLDAATIAGLHPLHLIHETTATALAYGIYKTDLPENDQLNVAFIDIGHASMQVCIAGFKKGQLKILSHAFDRSLGGRDFDEVLFNHFAAKFKDEYKIDVSQNAKASLRLRATCEKLKKVLSANPMAPLNIECLMAEKDVRGVIKREEFEEISIPILERVKRPLEKALSDAGLTVEDVHMVEVVGSGSRVPAMIKILTEFFGKEPRRTMNASECVSRGCALQCAILSPTFKVREFQVHESFPFSISLAWKGAATDAQNGGTENQQSTIVFPKGNPIPSVKALTFYRSGTFSIDVQYSDVNDLQAPPKISTYTIGPFQSSKGERAKLKVKVRLNLHGIVSVESATLLEEEEVEVSVTKDQSEETAKMDTDKASAEAAPASGDSDVNMQDAKDTSDATGTDNGVPESAEKPVQMETDSKAEAPKKKVKKTNVPLSELVYGALKTVEVEKAVEKEFEMALQDRVMEETKDRKNAVESYVYDMRNKLSDKYQEYITDSEREAFLANLQEVEDWLYEDGEDETKGVYVAKLEELKKVGDPVEVRYKESLERGSVIDQLGYCINSYREAAVSNDPKFDHIELAEKQKVLNECVEAEAWLREKQQQQDTLPKYATPALLSADVKSKAEALDKFCRPIMTKPKPAAKAEAPQAKGGEQADEGKSEPEQPASAEAMETENPAEGST.

2 disordered regions span residues 502-579 (EEEV…KKKV) and 784-831 (IMTK…EGST). The segment covering 512 to 526 (DQSEETAKMDTDKAS) has biased composition (basic and acidic residues). Phosphoserine is present on residues serine 533 and serine 536. Residues 787–800 (KPKPAAKAEAPQAK) are compositionally biased toward low complexity.

This sequence belongs to the heat shock protein 70 (TC 1.A.33) family. HSP110/SSE subfamily.

The protein resides in the cytoplasm. Its subcellular location is the nucleus. In cooperation with other chaperones, Hsp70s are key components that facilitate folding of de novo synthesized proteins, assist translocation of precursor proteins into organelles, and are responsible for degradation of damaged protein under stress conditions. The polypeptide is Heat shock 70 kDa protein 15 (HSP70-15) (Arabidopsis thaliana (Mouse-ear cress)).